Consider the following 201-residue polypeptide: Molybdenum cofactor guanylyltransferase (201 aa).

GTP-binding positions include 15-17 (LAG), Lys28, Asp74, and Asp104. Asp104 contacts Mg(2+).

The protein belongs to the MobA family. In terms of assembly, monomer. The cofactor is Mg(2+).

It localises to the cytoplasm. The enzyme catalyses Mo-molybdopterin + GTP + H(+) = Mo-molybdopterin guanine dinucleotide + diphosphate. Functionally, transfers a GMP moiety from GTP to Mo-molybdopterin (Mo-MPT) cofactor (Moco or molybdenum cofactor) to form Mo-molybdopterin guanine dinucleotide (Mo-MGD) cofactor. The chain is Molybdenum cofactor guanylyltransferase from Pseudomonas syringae pv. syringae (strain B728a).